Reading from the N-terminus, the 181-residue chain is Large ribosomal subunit protein uL5 (181 aa).

The protein belongs to the universal ribosomal protein uL5 family. Part of the 50S ribosomal subunit; part of the 5S rRNA/L5/L18/L25 subcomplex. Contacts the 5S rRNA and the P site tRNA. Forms a bridge to the 30S subunit in the 70S ribosome.

In terms of biological role, this is one of the proteins that bind and probably mediate the attachment of the 5S RNA into the large ribosomal subunit, where it forms part of the central protuberance. In the 70S ribosome it contacts protein S13 of the 30S subunit (bridge B1b), connecting the 2 subunits; this bridge is implicated in subunit movement. Contacts the P site tRNA; the 5S rRNA and some of its associated proteins might help stabilize positioning of ribosome-bound tRNAs. The protein is Large ribosomal subunit protein uL5 of Helicobacter pylori (strain Shi470).